The following is an 87-amino-acid chain: Mitochondrial import protein 2 (87 aa).

Residues 1 to 53 (MADSEDTSVILQGIDTINSVEGLEEDGYLSDEDTSLSNELADAQRQWEESLQQ) lie on the Cytoplasmic side of the membrane. A helical membrane pass occupies residues 54–71 (LNKLLNWVLLPLLGKYIG). At 72–87 (RRMAKTLWSRFIEHFV) the chain is on the mitochondrial intermembrane side.

The protein belongs to the MIM2 family. Component of the MIM complex containing at least MIM1 and MIM2. Interacts with MIM1; interaction is direct.

It is found in the mitochondrion outer membrane. Functionally, component of the MIM complex required for outer membrane protein import. Involved in import of the subset of proteins with multiple alpha-helical transmembrane segments, including UGO1, TOM20 and FZO1. The polypeptide is Mitochondrial import protein 2 (Saccharomyces cerevisiae (strain ATCC 204508 / S288c) (Baker's yeast)).